The following is a 272-amino-acid chain: uncharacterized protein (272 aa).

The signal sequence occupies residues 1 to 22 (MEYIKKIALYMSVLLLIIFIGG). Residue Cys23 is the site of N-palmitoyl cysteine attachment. Cys23 is lipidated: S-diacylglycerol cysteine.

It belongs to the staphylococcal tandem lipoprotein family.

It localises to the cell membrane. This is an uncharacterized protein from Staphylococcus aureus (strain MRSA252).